Reading from the N-terminus, the 274-residue chain is Energy-coupling factor transporter ATP-binding protein EcfA1 (274 aa).

The 235-residue stretch at 11-245 folds into the ABC transporter domain; the sequence is IELKNVKFKY…ERVIEIAKID (235 aa). Position 45–52 (45–52) interacts with ATP; sequence GHNGSGKS.

The protein belongs to the ABC transporter superfamily. Energy-coupling factor EcfA family. In terms of assembly, forms a stable energy-coupling factor (ECF) transporter complex composed of 2 membrane-embedded substrate-binding proteins (S component), 2 ATP-binding proteins (A component) and 2 transmembrane proteins (T component).

The protein localises to the cell membrane. In terms of biological role, ATP-binding (A) component of a common energy-coupling factor (ECF) ABC-transporter complex. Unlike classic ABC transporters this ECF transporter provides the energy necessary to transport a number of different substrates. This Mycoplasma mobile (strain ATCC 43663 / 163K / NCTC 11711) (Mesomycoplasma mobile) protein is Energy-coupling factor transporter ATP-binding protein EcfA1.